Consider the following 417-residue polypeptide: Gamma-glutamyl phosphate reductase (417 aa).

Belongs to the gamma-glutamyl phosphate reductase family.

It localises to the cytoplasm. It carries out the reaction L-glutamate 5-semialdehyde + phosphate + NADP(+) = L-glutamyl 5-phosphate + NADPH + H(+). It functions in the pathway amino-acid biosynthesis; L-proline biosynthesis; L-glutamate 5-semialdehyde from L-glutamate: step 2/2. In terms of biological role, catalyzes the NADPH-dependent reduction of L-glutamate 5-phosphate into L-glutamate 5-semialdehyde and phosphate. The product spontaneously undergoes cyclization to form 1-pyrroline-5-carboxylate. This is Gamma-glutamyl phosphate reductase from Streptococcus agalactiae serotype Ia (strain ATCC 27591 / A909 / CDC SS700).